The following is an 818-amino-acid chain: Lon protease (818 aa).

Residues 14–216 (LPVLPLRDVV…KVFALIEREI (203 aa)) form the Lon N-terminal domain. 370-377 (GPPGVGKT) is an ATP binding site. A Lon proteolytic domain is found at 605-786 (ESLVGIVTGL…DEVIKVALMH (182 aa)). Active-site residues include S692 and K735.

Belongs to the peptidase S16 family. Homohexamer. Organized in a ring with a central cavity.

It is found in the cytoplasm. The catalysed reaction is Hydrolysis of proteins in presence of ATP.. In terms of biological role, ATP-dependent serine protease that mediates the selective degradation of mutant and abnormal proteins as well as certain short-lived regulatory proteins. Required for cellular homeostasis and for survival from DNA damage and developmental changes induced by stress. Degrades polypeptides processively to yield small peptide fragments that are 5 to 10 amino acids long. Binds to DNA in a double-stranded, site-specific manner. In Wolbachia pipientis subsp. Culex pipiens (strain wPip), this protein is Lon protease.